Reading from the N-terminus, the 431-residue chain is NADH-quinone oxidoreductase chain 1 (431 aa).

Position 54 to 63 (Gly-54 to Gly-63) interacts with NAD(+). Gly-167–Ser-214 contributes to the FMN binding site. Cys-346, Cys-349, Cys-352, and Cys-392 together coordinate [4Fe-4S] cluster.

Belongs to the complex I 51 kDa subunit family. As to quaternary structure, NDH-1 is composed of at least 14 different subunits, Nqo1 to Nqo14. The complex has a L-shaped structure, with the hydrophobic arm (subunits Nqo7, Nqo8, Nqo10 to Nqo14) embedded in the inner membrane and the hydrophilic peripheral arm (subunits Nqo1 to Nqo6, Nqo9) protruding into the bacterial cytoplasm. The hydrophilic domain contains all the redox centers. It depends on FMN as a cofactor. The cofactor is [4Fe-4S] cluster.

It is found in the cell inner membrane. It carries out the reaction a quinone + NADH + 5 H(+)(in) = a quinol + NAD(+) + 4 H(+)(out). In terms of biological role, NDH-1 shuttles electrons from NADH, via FMN and iron-sulfur (Fe-S) centers, to quinones in the respiratory chain. The immediate electron acceptor for the enzyme in this species is believed to be ubiquinone. Couples the redox reaction to proton translocation (for every two electrons transferred, four hydrogen ions are translocated across the cytoplasmic membrane), and thus conserves the redox energy in a proton gradient. This is NADH-quinone oxidoreductase chain 1 (nqo1) from Paracoccus denitrificans.